A 415-amino-acid polypeptide reads, in one-letter code: Mitogen-activated protein kinase kinae MST7 (415 aa).

The segment at 1-37 is disordered; the sequence is MADPFAPRTMKRRNVKGLALTPAAPKPPPTAENAPIH. The 266-residue stretch at 61-326 folds into the Protein kinase domain; sequence LEVIKDLGSG…EELFERDPFV (266 aa). ATP contacts are provided by residues 67–75 and lysine 90; that span reads LGSGNGGTV. Positions 363-409 are disordered; it reads DLLRSSDSPTATYHGDDRPLETPTSAYRVDPRRGPAEGSAGLADQVD.

This sequence belongs to the protein kinase superfamily. STE Ser/Thr protein kinase family. MAP kinase kinase subfamily. Homodimer. Interacts with the adapter protein MST50. Interacts with TRX2.

The catalysed reaction is L-seryl-[protein] + ATP = O-phospho-L-seryl-[protein] + ADP + H(+). The enzyme catalyses L-threonyl-[protein] + ATP = O-phospho-L-threonyl-[protein] + ADP + H(+). Functionally, mitogen-activated protein kinase kinase; part of the MST11-MST7-PMK1 MAP kinase (MAPK) cascade that is essential for appressorium formation, penetration and invasive growth. The MST11-MST7-PMK1 MAP kinase cascade transduces signals from the cell surface sensors MDB2 and SHO1 that recognize various surface signals such as surface hydrophobicity, cutin monomers, and rice leaf waxes. MST7 acts as the upstream MAPKK that directly phosphorylates MAP kinase PMK1. This chain is Mitogen-activated protein kinase kinae MST7, found in Pyricularia oryzae (strain 70-15 / ATCC MYA-4617 / FGSC 8958) (Rice blast fungus).